A 393-amino-acid polypeptide reads, in one-letter code: Chalcone synthase DII (393 aa).

Cysteine 164 is an active-site residue.

The protein belongs to the thiolase-like superfamily. Chalcone/stilbene synthases family.

It catalyses the reaction (E)-4-coumaroyl-CoA + 3 malonyl-CoA + 3 H(+) = 2',4,4',6'-tetrahydroxychalcone + 3 CO2 + 4 CoA. It functions in the pathway secondary metabolite biosynthesis; flavonoid biosynthesis. In terms of biological role, the primary product of this enzyme is 4,2',4',6'-tetrahydroxychalcone (also termed naringenin-chalcone or chalcone) which can under specific conditions spontaneously isomerize into naringenin. The polypeptide is Chalcone synthase DII (CHS-DII) (Ipomoea batatas (Sweet potato)).